Here is an 86-residue protein sequence, read N- to C-terminus: RQC P-site tRNA stabilizing factor (86 aa).

Residues Met1 to Glu62 form the S4 RNA-binding domain.

The protein belongs to the RqcP family. As to quaternary structure, associates with stalled 50S ribosomal subunits. Binds to RqcH, 23S rRNA and the P-site tRNA. Does not require RqcH for association with 50S subunits. Crystallized 50S subunits are variously associated with an A/P-site tRNA with or without RqcH, as well as with P- and E-site tRNAs but no RqcH. Displaced from the 50S subunit by puromycin but not thiostrepton.

In terms of biological role, key component of the ribosome quality control system (RQC), a ribosome-associated complex that mediates the extraction of incompletely synthesized nascent chains from stalled ribosomes and their subsequent degradation. RqcH recruits Ala-charged tRNA, and with RqcP directs the elongation of stalled nascent chains on 50S ribosomal subunits, leading to non-templated C-terminal alanine extensions (Ala tail). The Ala tail promotes nascent chain degradation. RqcP is associated with the translocation-like movement of the peptidyl-tRNA from the A-site into the P-site. RqcH, RqcP and charged tRNA(Ala) are necessary and sufficient to add an Ala tail to a model stalled nascent peptide; does not add Val. The polypeptide is RQC P-site tRNA stabilizing factor (Bacillus subtilis (strain 168)).